We begin with the raw amino-acid sequence, 149 residues long: D-aminoacyl-tRNA deacylase (149 aa).

A Gly-cisPro motif, important for rejection of L-amino acids motif is present at residues 137-138 (GP).

The protein belongs to the DTD family. In terms of assembly, homodimer.

It localises to the cytoplasm. The catalysed reaction is glycyl-tRNA(Ala) + H2O = tRNA(Ala) + glycine + H(+). The enzyme catalyses a D-aminoacyl-tRNA + H2O = a tRNA + a D-alpha-amino acid + H(+). In terms of biological role, an aminoacyl-tRNA editing enzyme that deacylates mischarged D-aminoacyl-tRNAs. Also deacylates mischarged glycyl-tRNA(Ala), protecting cells against glycine mischarging by AlaRS. Acts via tRNA-based rather than protein-based catalysis; rejects L-amino acids rather than detecting D-amino acids in the active site. By recycling D-aminoacyl-tRNA to D-amino acids and free tRNA molecules, this enzyme counteracts the toxicity associated with the formation of D-aminoacyl-tRNA entities in vivo and helps enforce protein L-homochirality. The protein is D-aminoacyl-tRNA deacylase of Geobacter sp. (strain M21).